The chain runs to 54 residues: MKLLTHVCHYCSFSFFTRKFDVFGAITKKDTPVVFCPTCGNQSLSVSHIEEEIR.

It belongs to the phi29likevirus gp16.6 family.

The sequence is that of Gene product 16.6 (16.6) from Bacillus phage phi29 (Bacteriophage phi-29).